We begin with the raw amino-acid sequence, 90 residues long: Envelope protein US9 (90 aa).

Over 1 to 67 (MTSRLSDPNS…RRRRTRCVGM (67 aa)) the chain is Intravirion. Residues 21 to 24 (YPTA) carry the Internalization motif motif. An acidic region spans residues 30 to 39 (EAYYSESEDE). A phosphoserine; by host CK2 mark is found at serine 34 and serine 36. The chain crosses the membrane as a helical; Signal-anchor for type II membrane protein span at residues 68–88 (VIACLLVAVLSGGFGALLMWL). Over 89–90 (LR) the chain is Virion surface.

It belongs to the alphaherpesvirinae envelope protein US9 family. Post-translationally, phosphorylated on serines within the acidic cluster, possibly by host CK2. Phosphorylation determines whether endocytosed viral US9 traffics to the trans-Golgi network or recycles to the cell membrane.

It is found in the virion membrane. The protein localises to the host Golgi apparatus membrane. It localises to the host smooth endoplasmic reticulum membrane. The protein resides in the host cell membrane. Essential for the anterograde spread of the infection throughout the host nervous system. Together with the gE/gI heterodimer, US9 is involved in the sorting and transport of viral structural components toward axon tips. This is Envelope protein US9 from Homo sapiens (Human).